The following is a 624-amino-acid chain: Bifunctional protein ArgH (624 aa).

The argininosuccinate lyase stretch occupies residues 1 to 466 (MALWGGRFSQ…QERDNAGVKV (466 aa)). The N-acetyltransferase domain maps to 464-614 (VKVRPARLTD…DEVALEVNLQ (151 aa)). The probable acetyltransferase stretch occupies residues 467–624 (RPARLTDLDA…EQVIIKSSVA (158 aa)).

The protein in the N-terminal section; belongs to the lyase 1 family. Argininosuccinate lyase subfamily.

Its subcellular location is the cytoplasm. It catalyses the reaction 2-(N(omega)-L-arginino)succinate = fumarate + L-arginine. The protein operates within amino-acid biosynthesis; L-arginine biosynthesis; L-arginine from L-ornithine and carbamoyl phosphate: step 3/3. In Aliivibrio fischeri (strain ATCC 700601 / ES114) (Vibrio fischeri), this protein is Bifunctional protein ArgH (argH).